The following is a 493-amino-acid chain: Glutamyl-tRNA(Gln) amidotransferase subunit A (493 aa).

Catalysis depends on charge relay system residues Lys78 and Ser158. The active-site Acyl-ester intermediate is Ser182.

It belongs to the amidase family. GatA subfamily. Heterotrimer of A, B and C subunits.

It carries out the reaction L-glutamyl-tRNA(Gln) + L-glutamine + ATP + H2O = L-glutaminyl-tRNA(Gln) + L-glutamate + ADP + phosphate + H(+). In terms of biological role, allows the formation of correctly charged Gln-tRNA(Gln) through the transamidation of misacylated Glu-tRNA(Gln) in organisms which lack glutaminyl-tRNA synthetase. The reaction takes place in the presence of glutamine and ATP through an activated gamma-phospho-Glu-tRNA(Gln). This chain is Glutamyl-tRNA(Gln) amidotransferase subunit A, found in Rickettsia canadensis (strain McKiel).